Here is a 157-residue protein sequence, read N- to C-terminus: 2-C-methyl-D-erythritol 2,4-cyclodiphosphate synthase (157 aa).

Residues Asp8 and His10 each coordinate a divalent metal cation. 4-CDP-2-C-methyl-D-erythritol 2-phosphate is bound by residues 8–10 (DVH) and 34–35 (HS). Residue His42 participates in a divalent metal cation binding. Residues 56–58 (DIG), 132–135 (TTNE), and Arg142 each bind 4-CDP-2-C-methyl-D-erythritol 2-phosphate.

It belongs to the IspF family. In terms of assembly, homotrimer. A divalent metal cation is required as a cofactor.

The catalysed reaction is 4-CDP-2-C-methyl-D-erythritol 2-phosphate = 2-C-methyl-D-erythritol 2,4-cyclic diphosphate + CMP. Its pathway is isoprenoid biosynthesis; isopentenyl diphosphate biosynthesis via DXP pathway; isopentenyl diphosphate from 1-deoxy-D-xylulose 5-phosphate: step 4/6. In terms of biological role, involved in the biosynthesis of isopentenyl diphosphate (IPP) and dimethylallyl diphosphate (DMAPP), two major building blocks of isoprenoid compounds. Catalyzes the conversion of 4-diphosphocytidyl-2-C-methyl-D-erythritol 2-phosphate (CDP-ME2P) to 2-C-methyl-D-erythritol 2,4-cyclodiphosphate (ME-CPP) with a corresponding release of cytidine 5-monophosphate (CMP). This chain is 2-C-methyl-D-erythritol 2,4-cyclodiphosphate synthase, found in Chlorobium luteolum (strain DSM 273 / BCRC 81028 / 2530) (Pelodictyon luteolum).